The primary structure comprises 517 residues: MGCVFCKKLEPASKEDVGLEGDFRSQTAEERYFPDPTQGRTSSVFPQPTSPAFLNTGNMRSISGTGVTIFVALYDYEARTGDDLTFTKGEKFHILNNTEYDWWEARSLSSGHRGYVPSNYVAPVDSIQAEEWYFGKISRKDAERQLLSSGNPQGAFLIRESETTKGAYSLSIRDWDQNRGDHIKHYKIRKLDTGGYYITTRAQFDSIQDLVRHYMEVNDGLCYLLTAPCTTTKPQTLGLAKDAWEIDRNSIALERRLGTGCFGDVWLGTWNCSTKVAVKTLKPGTMSPKAFLEEAQIMKLLRHDKLVQLYAVVSEEPIYIVTEFMCYGSLLDFLKDREGQNLMLPHLVDMAAQVAEGMAYMERMNYIHRDLRAANILVGEYLICKIADFGLARLIEDNEYNPQQGTKFPIKWTAPEAALFGRFTVKSDVWSFGILLTELITKGRVPYPGMNNREVLEQVEHGYHMPCPPGCPASLYEVMEQAWRLDPEERPTFEYLQSFLEDYFTSTEPQYQPGDQT.

Gly2 carries the N-myristoyl glycine lipid modification. 2 S-palmitoyl cysteine lipidation sites follow: Cys3 and Cys6. Residue Ser13 is modified to Phosphoserine. Position 32 is a phosphotyrosine (Tyr32). Ser50 is modified (phosphoserine). The SH3 domain occupies 65-126 (TGVTIFVALY…PSNYVAPVDS (62 aa)). Residues 102–103 (WW) form an interaction with CLNK region. Positions 132–229 (WYFGKISRKD…GLCYLLTAPC (98 aa)) constitute an SH2 domain. Phosphotyrosine is present on Tyr196. A Phosphoserine modification is found at Ser206. The 254-residue stretch at 251–504 (IALERRLGTG…YLQSFLEDYF (254 aa)) folds into the Protein kinase domain. Residues 257–265 (LGTGCFGDV) and Lys279 contribute to the ATP site. The active-site Proton acceptor is Asp370. Tyr400 bears the Phosphotyrosine mark. Phosphotyrosine; by SRC is present on Tyr511.

It belongs to the protein kinase superfamily. Tyr protein kinase family. SRC subfamily. As to quaternary structure, interacts with ITGB1, ITGB2, MS4A2/FCER1B, FCER1G and FCGR2. Interacts (via SH2 domain) with SYK (tyrosine phosphorylated). Interacts (via SH2 domain) with FLT3 (tyrosine phosphorylated). Interacts with PTK2/FAK1. Interacts (via SH2 domain) with HCLS1 (tyrosine phosphorylated by SYK). Interacts with SIRPA and PTPNS1. Interacts (not phosphorylated on tyrosine residues) with CBL; FGR tyrosine phosphorylation promotes dissociation. Interacts with CLNK. Ubiquitinated. Becomes ubiquitinated in response to ITGB2 signaling; this does not lead to degradation. In terms of processing, phosphorylated. Autophosphorylated on tyrosine residues. Becomes phosphorylated in response to FCGR2 engagement, cell adhesion and signaling by ITGB2. Prior phosphorylation at Tyr-511 by SRC inhibits ulterior autophosphorylation at Tyr-400. As to expression, expressed in natural killer cells (at protein level).

The protein resides in the cell membrane. Its subcellular location is the cell projection. It is found in the ruffle membrane. It localises to the cytoplasm. The protein localises to the cytosol. The protein resides in the cytoskeleton. Its subcellular location is the mitochondrion inner membrane. It is found in the mitochondrion intermembrane space. It carries out the reaction L-tyrosyl-[protein] + ATP = O-phospho-L-tyrosyl-[protein] + ADP + H(+). Its activity is regulated as follows. Activated by autophosphorylation. Prior phosphorylation at Tyr-511 by SRC inhibits ulterior autophosphorylation at Tyr-400. Activated by phorbol myristate acetate, phosphatidic acid and poly-Lys. Binding (via SH2 domain) of HCLS1 that is already phosphorylated by SYK strongly increases kinase activity. Its function is as follows. Non-receptor tyrosine-protein kinase that transmits signals from cell surface receptors devoid of kinase activity and contributes to the regulation of immune responses, including neutrophil, monocyte, macrophage and mast cell functions, cytoskeleton remodeling in response to extracellular stimuli, phagocytosis, cell adhesion and migration. Promotes mast cell degranulation, release of inflammatory cytokines and IgE-mediated anaphylaxis. Acts downstream of receptors that bind the Fc region of immunoglobulins, such as MS4A2/FCER1B, FCER1G and FCGR2. Acts downstream of ITGB1 and ITGB2, and regulates actin cytoskeleton reorganization, cell spreading and adhesion. Depending on the context, activates or inhibits cellular responses. Functions as a negative regulator of ITGB2 signaling, phagocytosis and SYK activity in monocytes. Required for normal ITGB1 and ITGB2 signaling, normal cell spreading and adhesion in neutrophils and macrophages. Functions as a positive regulator of cell migration and regulates cytoskeleton reorganization via RAC1 activation. Phosphorylates SYK (in vitro) and promotes SYK-dependent activation of AKT1 and MAP kinase signaling. Phosphorylates PLD2 in antigen-stimulated mast cells, leading to PLD2 activation and the production of the signaling molecules lysophosphatidic acid and diacylglycerol. Promotes activation of PIK3R1. Phosphorylates FASLG, and thereby regulates its ubiquitination and subsequent internalization. Phosphorylates ABL1. Promotes phosphorylation of CBL, CTTN, PIK3R1, PTK2/FAK1, PTK2B/PYK2 and VAV2. Phosphorylates HCLS1 that has already been phosphorylated by SYK, but not unphosphorylated HCLS1. Together with CLNK, it acts as a negative regulator of natural killer cell-activating receptors and inhibits interferon-gamma production. This Mus musculus (Mouse) protein is Tyrosine-protein kinase Fgr (Fgr).